A 550-amino-acid polypeptide reads, in one-letter code: Dihydroxy-acid dehydratase (550 aa).

Asp78 serves as a coordination point for Mg(2+). Cys119 is a binding site for [2Fe-2S] cluster. The Mg(2+) site is built by Asp120 and Lys121. Lys121 carries the N6-carboxylysine modification. Cys191 provides a ligand contact to [2Fe-2S] cluster. A Mg(2+)-binding site is contributed by Glu440. Ser466 serves as the catalytic Proton acceptor.

This sequence belongs to the IlvD/Edd family. As to quaternary structure, homodimer. It depends on [2Fe-2S] cluster as a cofactor. Requires Mg(2+) as cofactor.

The catalysed reaction is (2R)-2,3-dihydroxy-3-methylbutanoate = 3-methyl-2-oxobutanoate + H2O. It carries out the reaction (2R,3R)-2,3-dihydroxy-3-methylpentanoate = (S)-3-methyl-2-oxopentanoate + H2O. It functions in the pathway amino-acid biosynthesis; L-isoleucine biosynthesis; L-isoleucine from 2-oxobutanoate: step 3/4. The protein operates within amino-acid biosynthesis; L-valine biosynthesis; L-valine from pyruvate: step 3/4. Its function is as follows. Functions in the biosynthesis of branched-chain amino acids. Catalyzes the dehydration of (2R,3R)-2,3-dihydroxy-3-methylpentanoate (2,3-dihydroxy-3-methylvalerate) into 2-oxo-3-methylpentanoate (2-oxo-3-methylvalerate) and of (2R)-2,3-dihydroxy-3-methylbutanoate (2,3-dihydroxyisovalerate) into 2-oxo-3-methylbutanoate (2-oxoisovalerate), the penultimate precursor to L-isoleucine and L-valine, respectively. In Methanococcus maripaludis (strain C6 / ATCC BAA-1332), this protein is Dihydroxy-acid dehydratase.